Consider the following 330-residue polypeptide: Catharanthine synthase (330 aa).

The short motif at 81 to 83 (HGA) is the Involved in the stabilization of the negatively charged intermediate by the formation of the oxyanion hole element. Position 84 (Gly84) interacts with catharanthine. Ser173 serves as the catalytic Proton acceptor. Residue Asp274 is part of the active site. Tyr305 is a catharanthine binding site. The active-site Proton donor/acceptor is the Tyr305.

This sequence belongs to the 'GDXG' lipolytic enzyme family. Interacts with dehydroprecondylocarpine acetate synthase (DPAS). As to expression, expressed in leaf epidermis.

It localises to the cytoplasm. Its subcellular location is the cytosol. The protein resides in the nucleus. It carries out the reaction dehydrosecodine = catharanthine. It participates in alkaloid biosynthesis. Functionally, component of iboga and aspidosperma monoterpenoid indole alkaloids (MIAs, e.g. tabersonine and catharanthine) biosynthesis pathway from 19E-geissoschizine, psychoactive compounds likely to be used in the treatment of opioid dependence. Catalyzes the conversion of dehydrosecodine to catharanthine. This Catharanthus roseus (Madagascar periwinkle) protein is Catharanthine synthase.